Consider the following 132-residue polypeptide: Small ribosomal subunit protein uS8 (132 aa).

Belongs to the universal ribosomal protein uS8 family. As to quaternary structure, part of the 30S ribosomal subunit. Contacts proteins S5 and S12.

In terms of biological role, one of the primary rRNA binding proteins, it binds directly to 16S rRNA central domain where it helps coordinate assembly of the platform of the 30S subunit. The sequence is that of Small ribosomal subunit protein uS8 from Halothermothrix orenii (strain H 168 / OCM 544 / DSM 9562).